Consider the following 401-residue polypeptide: uncharacterized protein (401 aa).

7 consecutive transmembrane segments (helical) span residues 44–64 (LKYT…LVFI), 69–89 (LYSF…FVLL), 99–119 (LVFN…LIIF), 130–150 (ILST…SIIP), 201–221 (FIYA…LYIL), 246–266 (ILFY…SFVA), and 286–306 (LFFS…GTVV).

The protein resides in the cell membrane. This is an uncharacterized protein from Mycoplasma pneumoniae (strain ATCC 29342 / M129 / Subtype 1) (Mycoplasmoides pneumoniae).